Consider the following 141-residue polypeptide: Small ribosomal subunit protein uS19 (141 aa).

It belongs to the universal ribosomal protein uS19 family.

Its function is as follows. Protein S19 forms a complex with S13 that binds strongly to the 16S ribosomal RNA. This chain is Small ribosomal subunit protein uS19, found in Thermofilum pendens (strain DSM 2475 / Hrk 5).